Consider the following 433-residue polypeptide: MSANSFKLLVKNATQLVLVCRNGEKYLTRDEMQALAVLENASVLIGHDGLIKAVGPADVIETQFEGAKFDNVLDASGMCVLPGLVDAHTHPVWAGDRVHEFAMKLAGATYMEVHEAGGGIHFTVAHTRSASEQHLLAALKSRLERMMRAGTTLVECKSGYGLELDIEVKMLRVINSARKSLPIGISATYCGAHAVPKGKTMEEATKDIVAVQLPKIKHLSASGDLQVDNIDVFCEKGVFDLTSTRCILQAGKDMGLNINFHGDELHPMNSAHLGAELGALAISHLEEVTDDGIVAMAKSKTSAVLLPTTAYILRLTPPRARDMLDAGVIVALGSDFNPNAYCFSMPMVMHLACVMMKMSMPEALAASTINAAYALNRSQTHGSLEVGKQGDLVIINAPRWEHLVYQFGGHQELIRYVIIKGDFVYENDKVLNL.

Positions 160 and 193 each coordinate 4-imidazolone-5-propanoate. Y160 provides a ligand contact to N-formimidoyl-L-glutamate. H261 lines the Fe(3+) pocket. H261 provides a ligand contact to Zn(2+). E264 contacts 4-imidazolone-5-propanoate. Position 335 (D335) interacts with Fe(3+). Zn(2+) is bound at residue D335. An N-formimidoyl-L-glutamate-binding site is contributed by N337.

The protein belongs to the metallo-dependent hydrolases superfamily. HutI family. It depends on Zn(2+) as a cofactor. The cofactor is Fe(3+).

The catalysed reaction is 4-imidazolone-5-propanoate + H2O = N-formimidoyl-L-glutamate. The protein operates within amino-acid degradation; L-histidine degradation into L-glutamate; N-formimidoyl-L-glutamate from L-histidine: step 3/3. This Danio rerio (Zebrafish) protein is Probable imidazolonepropionase (amdhd1).